Reading from the N-terminus, the 197-residue chain is Probable nicotinate-nucleotide adenylyltransferase (197 aa).

It belongs to the NadD family.

The catalysed reaction is nicotinate beta-D-ribonucleotide + ATP + H(+) = deamido-NAD(+) + diphosphate. Its pathway is cofactor biosynthesis; NAD(+) biosynthesis; deamido-NAD(+) from nicotinate D-ribonucleotide: step 1/1. Catalyzes the reversible adenylation of nicotinate mononucleotide (NaMN) to nicotinic acid adenine dinucleotide (NaAD). The protein is Probable nicotinate-nucleotide adenylyltransferase of Borrelia garinii subsp. bavariensis (strain ATCC BAA-2496 / DSM 23469 / PBi) (Borreliella bavariensis).